The sequence spans 285 residues: MSAQIIDGKIISQTVRQEVAARVKARTDAGLRAPGLAVVLVGQDPASQIYVGSKRKACEEVGFISKSFDLPSSASEQQLLDLIDELNQDPTMDGILVQLPLPAGMDCTRILERIDPEKDVDGFHPYNVGRLSQRIPKLRSCTPKGIITLLERYNIEVRGKHAVIVGASNIVGRPMTLELLLAGATTTTCHRFTQDLEGHIRQADILVVAVGKPNFIPGGWIKEGATVIDVGINRLENGKLCGDVEFDVACQRAKYITPVPGGVGPMTVASLIENTLLACEQYHSA.

Residues 166-168 (GAS) and I232 contribute to the NADP(+) site.

Belongs to the tetrahydrofolate dehydrogenase/cyclohydrolase family. Homodimer.

It carries out the reaction (6R)-5,10-methylene-5,6,7,8-tetrahydrofolate + NADP(+) = (6R)-5,10-methenyltetrahydrofolate + NADPH. The enzyme catalyses (6R)-5,10-methenyltetrahydrofolate + H2O = (6R)-10-formyltetrahydrofolate + H(+). It participates in one-carbon metabolism; tetrahydrofolate interconversion. Its activity is regulated as follows. The NAD(+)-dependent dehydrogenase is activated by inorganic phosphate. Its function is as follows. Catalyzes the oxidation of 5,10-methylenetetrahydrofolate to 5,10-methenyltetrahydrofolate and then the hydrolysis of 5,10-methenyltetrahydrofolate to 10-formyltetrahydrofolate. This is Bifunctional protein FolD from Photobacterium phosphoreum.